Here is a 60-residue protein sequence, read N- to C-terminus: UPF0434 protein Spro_1718 (60 aa).

The protein belongs to the UPF0434 family.

The polypeptide is UPF0434 protein Spro_1718 (Serratia proteamaculans (strain 568)).